Consider the following 273-residue polypeptide: Outer surface protein A (273 aa).

An N-terminal signal peptide occupies residues 1–16 (MKKYLLGIGLILALIA). The N-palmitoyl cysteine moiety is linked to residue cysteine 17. Cysteine 17 carries the S-diacylglycerol cysteine lipid modification.

It belongs to the OspA lipoprotein family.

The protein resides in the cell outer membrane. It is found in the cell surface. This chain is Outer surface protein A, found in Borreliella burgdorferi (Lyme disease spirochete).